The chain runs to 96 residues: Large ribosomal subunit protein uL4 (96 aa).

The interval 77-96 is disordered; it reads RAPNKKVKRRELKKNPLKNL. A compositionally biased stretch (basic residues) spans 79–96; that stretch reads PNKKVKRRELKKNPLKNL.

The protein belongs to the universal ribosomal protein uL4 family. As to quaternary structure, component of the large ribosomal subunit.

It localises to the cytoplasm. Component of the large ribosomal subunit. The ribosome is a large ribonucleoprotein complex responsible for the synthesis of proteins in the cell. This chain is Large ribosomal subunit protein uL4 (rpl4), found in Xenopus tropicalis (Western clawed frog).